The primary structure comprises 78 residues: MSTIEERVKKIVAEQLGVKEDEVTNEKSFVDDLGADSLDTVELVMALEEEFETEIPDEEAEKITTVQAAIDYVNSHQG.

A Carrier domain is found at 2–77; sequence STIEERVKKI…AAIDYVNSHQ (76 aa). The residue at position 37 (S37) is an O-(pantetheine 4'-phosphoryl)serine.

This sequence belongs to the acyl carrier protein (ACP) family. In terms of processing, 4'-phosphopantetheine is transferred from CoA to a specific serine of apo-ACP by AcpS. This modification is essential for activity because fatty acids are bound in thioester linkage to the sulfhydryl of the prosthetic group.

Its subcellular location is the cytoplasm. The protein operates within lipid metabolism; fatty acid biosynthesis. Its function is as follows. Carrier of the growing fatty acid chain in fatty acid biosynthesis. The protein is Acyl carrier protein of Pseudomonas putida (strain W619).